We begin with the raw amino-acid sequence, 38 residues long: ATP synthase subunit O, mitochondrial (38 aa).

The protein belongs to the ATPase delta chain family. In terms of assembly, F-type ATPases have 2 components, CF(1) - the catalytic core - and CF(0) - the membrane proton channel. CF(1) has five subunits: alpha(3), beta(3), gamma(1), delta(1), epsilon(1). CF(0) has three main subunits: a, b and c.

The protein resides in the mitochondrion. Its subcellular location is the mitochondrion inner membrane. In terms of biological role, mitochondrial membrane ATP synthase (F(1)F(0) ATP synthase or Complex V) produces ATP from ADP in the presence of a proton gradient across the membrane which is generated by electron transport complexes of the respiratory chain. F-type ATPases consist of two structural domains, F(1) - containing the extramembraneous catalytic core and F(0) - containing the membrane proton channel, linked together by a central stalk and a peripheral stalk. During catalysis, ATP synthesis in the catalytic domain of F(1) is coupled via a rotary mechanism of the central stalk subunits to proton translocation. Part of the complex F(0) domain and the peripheric stalk, which acts as a stator to hold the catalytic alpha(3)beta(3) subcomplex and subunit a/ATP6 static relative to the rotary elements. The sequence is that of ATP synthase subunit O, mitochondrial from Pisum sativum (Garden pea).